The sequence spans 79 residues: Putative antitoxin MM_2475 (79 aa).

Belongs to the UPF0330 family.

Functionally, possibly the antitoxin component of a type II toxin-antitoxin (TA) system. The polypeptide is Putative antitoxin MM_2475 (Methanosarcina mazei (strain ATCC BAA-159 / DSM 3647 / Goe1 / Go1 / JCM 11833 / OCM 88) (Methanosarcina frisia)).